A 210-amino-acid chain; its full sequence is HTH-type transcriptional repressor ComR (210 aa).

Positions 18-78 (VFDRDAALDK…AVLDRYIDRF (61 aa)) constitute an HTH tetR-type domain. Positions 41 to 60 (SLADLVEATGAKAPTLYAEF) form a DNA-binding region, H-T-H motif.

Binding to the promoter region of BhsA/ComC is released in the presence of copper. In terms of biological role, represses expression of BhsA/ComC by binding to its promoter region in the absence of copper. The protein is HTH-type transcriptional repressor ComR (comR) of Escherichia coli (strain K12).